The chain runs to 138 residues: Large-conductance mechanosensitive channel (138 aa).

Helical transmembrane passes span 19–39 (VGVI…GDVI) and 81–101 (GSFL…FLVI).

This sequence belongs to the MscL family. In terms of assembly, homopentamer.

It localises to the cell inner membrane. In terms of biological role, channel that opens in response to stretch forces in the membrane lipid bilayer. May participate in the regulation of osmotic pressure changes within the cell. This chain is Large-conductance mechanosensitive channel, found in Bradyrhizobium diazoefficiens (strain JCM 10833 / BCRC 13528 / IAM 13628 / NBRC 14792 / USDA 110).